Reading from the N-terminus, the 467-residue chain is Uronate isomerase (467 aa).

Belongs to the metallo-dependent hydrolases superfamily. Uronate isomerase family.

The enzyme catalyses D-glucuronate = D-fructuronate. It carries out the reaction aldehydo-D-galacturonate = keto-D-tagaturonate. It participates in carbohydrate metabolism; pentose and glucuronate interconversion. This Haemophilus influenzae (strain PittGG) protein is Uronate isomerase.